Consider the following 272-residue polypeptide: Undecaprenyl-diphosphatase (272 aa).

Transmembrane regions (helical) follow at residues 5-25 (YSLFVAFVLGVVEGLTEFLPV), 45-65 (AKTFEVIIQLGSILAVVVVFW), 88-108 (HLTLGHILLAMIPAVGLGLAF), 115-135 (LFNPQSVMYALVAGGLLLLAA), 152-171 (TYRQAFAIGCFQCLALWPGF), 189-209 (YAASEFSFILAVPMMLGASGL), 221-241 (GDLPMFAVGFITAFVVALIAI), and 251-271 (ISFVPFAIYRFIVAAAVYWVF).

Belongs to the UppP family.

The protein resides in the cell inner membrane. The enzyme catalyses di-trans,octa-cis-undecaprenyl diphosphate + H2O = di-trans,octa-cis-undecaprenyl phosphate + phosphate + H(+). Catalyzes the dephosphorylation of undecaprenyl diphosphate (UPP). Confers resistance to bacitracin. The polypeptide is Undecaprenyl-diphosphatase (Yersinia enterocolitica serotype O:8 / biotype 1B (strain NCTC 13174 / 8081)).